The sequence spans 130 residues: Fluoride-specific ion channel FluC (130 aa).

4 helical membrane passes run 3 to 23 (FIFLWAALGGAIGSSLRYFVG), 39 to 59 (GTFSVNVIGCFVIGFMGHLAV), 67 to 87 (FGIFFVTGVLGGFTTFSSYGL), and 102 to 122 (VSYALGTNILGLIGVAIGWFL). Na(+)-binding residues include Gly-77 and Thr-80.

This sequence belongs to the fluoride channel Fluc/FEX (TC 1.A.43) family.

Its subcellular location is the cell inner membrane. It carries out the reaction fluoride(in) = fluoride(out). With respect to regulation, na(+) is not transported, but it plays an essential structural role and its presence is essential for fluoride channel function. Functionally, fluoride-specific ion channel. Important for reducing fluoride concentration in the cell, thus reducing its toxicity. The sequence is that of Fluoride-specific ion channel FluC from Helicobacter pylori (strain Shi470).